A 461-amino-acid chain; its full sequence is MNFDTFHNIIAGQHRSARETSSGVNPLDRSSLWPAPVATANDVEEAVRSAQEAFPAWSQKTYKQRTELLEKFADLYLAHANEFCQLIATECGRTAGNAAIEVYFAAQWLRYPSKYEISQEITEDDKKTSIVTQEPLGVVAAICPWNFPLMLALGKIAPALATGNCVILKPSPFTPYSSLKLVELAQQVFPPSVLQVLHGHDDLGPMLVKHSRIQKITFTGSTATGKQILRDAAETMKRVTLETAGNNASIILPDVNIKAVIPQLAGGLWFNAGQVCIATRRMYIHQDIFEEVVAQLAEASKDLTSSIEPIQNEMQLVRLKQALADANAAGYELLSLGKTEAAEGFFIRPTIIKNPPPDAHAVQQENFGPIVSCIKFSSLDEAIFLANNSDTGLAASVWSGDISAAKRVAAKLEAGNVYINGPPQPDPYVPFGGQKQSGLGVEYGLPGLLSFCQTKSTYVYK.

220–225 (GSTATG) contacts NAD(+). Residues E242 and C276 contribute to the active site.

Belongs to the aldehyde dehydrogenase family.

The enzyme catalyses an aldehyde + NAD(+) + H2O = a carboxylate + NADH + 2 H(+). In terms of biological role, putative aldehyde dehydrogenase; part of the gene cluster that mediates the biosynthesis of the mycotoxin fusarin C. Within the cluster, FUS1, FUS2, FUS8 and FUS9 are sufficient for fusarin production. The other FUS cluster members are not essential for fusarin C biosynthesis. The chain is Putative aldehyde dehydrogenase FUS7 from Gibberella moniliformis (strain M3125 / FGSC 7600) (Maize ear and stalk rot fungus).